The following is a 69-amino-acid chain: Dermaseptin-H3 (69 aa).

The first 22 residues, 1–22 (MAFLKKSLFLVLFLGMVSLSIC), serve as a signal peptide directing secretion. Residues 23-43 (EEEKRENEDEEKQEDDEQSEM) constitute a propeptide that is removed on maturation. The disordered stretch occupies residues 24-44 (EEKRENEDEEKQEDDEQSEMK). Residues 30 to 40 (EDEEKQEDDEQ) show a composition bias toward acidic residues. At Leu-66 the chain carries Leucine amide. The propeptide occupies 68-69 (EQ).

This sequence belongs to the frog skin active peptide (FSAP) family. Dermaseptin subfamily. Expressed by the skin glands.

It localises to the secreted. Functionally, possesses a potent antimicrobial activity against Gram-positive and Gram-negative bacteria. Probably acts by disturbing membrane functions with its amphipathic structure. In Pithecopus azureus (Orange-legged monkey tree frog), this protein is Dermaseptin-H3.